The sequence spans 295 residues: MIHGTKVLKEGFAKMTKGGVIMDVVNAEQAAIAEDAGAVSVMALERVPSDIRKAGGVARMADPSKVIEIMDAVDIPVMAKVRIGHFVEAQVLQSLGVDMIDESEVLTQADEDFHIDKEQFTIPFVCGARDLGEALRRVDEGAAMIRTKGEAGTGNVVEAVRHMRTIQGAIREIENKTEEELWQVAREINAPRELVKLTAEKGRIPVVNFSAGGIATPADAALMMQLGADGVFVGSGIFKSENPELVAKAVVEATAHYEDADLIADVSTDLGAAMPGIDINEIPEEERLQNRGNLI.

Asp23 is a binding site for D-ribose 5-phosphate. The active-site Schiff-base intermediate with D-ribose 5-phosphate is the Lys80. Gly152 contacts D-ribose 5-phosphate. Residue Arg164 coordinates D-glyceraldehyde 3-phosphate. Residues Gly213 and 234–235 (GS) each bind D-ribose 5-phosphate.

Belongs to the PdxS/SNZ family. As to quaternary structure, in the presence of PdxT, forms a dodecamer of heterodimers.

The enzyme catalyses aldehydo-D-ribose 5-phosphate + D-glyceraldehyde 3-phosphate + L-glutamine = pyridoxal 5'-phosphate + L-glutamate + phosphate + 3 H2O + H(+). It functions in the pathway cofactor biosynthesis; pyridoxal 5'-phosphate biosynthesis. Catalyzes the formation of pyridoxal 5'-phosphate from ribose 5-phosphate (RBP), glyceraldehyde 3-phosphate (G3P) and ammonia. The ammonia is provided by the PdxT subunit. Can also use ribulose 5-phosphate and dihydroxyacetone phosphate as substrates, resulting from enzyme-catalyzed isomerization of RBP and G3P, respectively. The sequence is that of Pyridoxal 5'-phosphate synthase subunit PdxS from Methanosphaera stadtmanae (strain ATCC 43021 / DSM 3091 / JCM 11832 / MCB-3).